A 491-amino-acid chain; its full sequence is Glycogen synthase 1 (491 aa).

Residue lysine 15 participates in ADP-alpha-D-glucose binding.

The protein belongs to the glycosyltransferase 1 family. Bacterial/plant glycogen synthase subfamily.

The enzyme catalyses [(1-&gt;4)-alpha-D-glucosyl](n) + ADP-alpha-D-glucose = [(1-&gt;4)-alpha-D-glucosyl](n+1) + ADP + H(+). It functions in the pathway glycan biosynthesis; glycogen biosynthesis. Functionally, synthesizes alpha-1,4-glucan chains using ADP-glucose. The protein is Glycogen synthase 1 of Synechococcus sp. (strain JA-2-3B'a(2-13)) (Cyanobacteria bacterium Yellowstone B-Prime).